Reading from the N-terminus, the 428-residue chain is Adenylosuccinate synthetase (428 aa).

Residues 12–18 (GDEGKGK) and 40–42 (GHT) contribute to the GTP site. The Proton acceptor role is filled by aspartate 13. The Mg(2+) site is built by aspartate 13 and glycine 40. IMP-binding positions include 13 to 16 (DEGK), 38 to 41 (NAGH), threonine 128, arginine 142, glutamine 223, threonine 238, and arginine 302. Histidine 41 acts as the Proton donor in catalysis. 298-304 (TTTGRPR) lines the substrate pocket. Residues arginine 304, 330 to 332 (SID), and 412 to 414 (SVG) each bind GTP.

It belongs to the adenylosuccinate synthetase family. Homodimer. It depends on Mg(2+) as a cofactor.

It is found in the cytoplasm. The catalysed reaction is IMP + L-aspartate + GTP = N(6)-(1,2-dicarboxyethyl)-AMP + GDP + phosphate + 2 H(+). Its pathway is purine metabolism; AMP biosynthesis via de novo pathway; AMP from IMP: step 1/2. Its function is as follows. Plays an important role in the de novo pathway of purine nucleotide biosynthesis. Catalyzes the first committed step in the biosynthesis of AMP from IMP. The protein is Adenylosuccinate synthetase of Streptococcus pneumoniae serotype 2 (strain D39 / NCTC 7466).